A 407-amino-acid polypeptide reads, in one-letter code: Succinate--CoA ligase [ADP-forming] subunit beta, hydrogenosomal (407 aa).

The N-terminal 9 residues, 1–9, are a transit peptide targeting the hydrogenosome; sequence MLSSSFARN. In terms of domain architecture, ATP-grasp spans 18 to 261; that stretch reads KEICAKYNVA…LKQVNPFEIR (244 aa). ATP is bound by residues Lys55, 62–64, and Glu124; that span reads GRG. Mg(2+) contacts are provided by Asn216 and Asp230. Substrate-binding positions include Asn281 and 338-340; that span reads GIV.

It belongs to the succinate/malate CoA ligase beta subunit family. In terms of assembly, heterodimer of an alpha and a beta subunit. It depends on Mg(2+) as a cofactor.

It is found in the hydrogenosome. The enzyme catalyses succinate + ATP + CoA = succinyl-CoA + ADP + phosphate. It functions in the pathway carbohydrate metabolism; tricarboxylic acid cycle; succinate from succinyl-CoA (ligase route): step 1/1. In terms of biological role, succinyl-CoA synthetase functions in the citric acid cycle (TCA), coupling the hydrolysis of succinyl-CoA to the synthesis of ATP and thus represents the only step of substrate-level phosphorylation in the TCA. The beta subunit provides nucleotide specificity of the enzyme and binds the substrate succinate, while the binding sites for coenzyme A and phosphate are found in the alpha subunit. In Trichomonas vaginalis, this protein is Succinate--CoA ligase [ADP-forming] subunit beta, hydrogenosomal.